Here is a 458-residue protein sequence, read N- to C-terminus: Tetratricopeptide repeat protein 23-like (458 aa).

2 coiled-coil regions span residues 175 to 198 and 246 to 278; these read GKQAYIHLQKAERNMKELKELNNG and TSELISLYEEIAQIEQLRKNHKQAIQYLQQAYS.

It localises to the cytoplasm. The protein localises to the cytoskeleton. It is found in the microtubule organizing center. The protein resides in the centrosome. Its subcellular location is the spindle. It localises to the midbody. The protein is Tetratricopeptide repeat protein 23-like (Ttc23l) of Mus musculus (Mouse).